The primary structure comprises 221 residues: Small ribosomal subunit protein eS8 (221 aa).

Disordered regions lie at residues 1–41 (MGIS…LSSN) and 128–169 (TPAA…TLDP). Basic residues predominate over residues 8 to 26 (MHKRRATGGKQKAWRKKRK). Residues 146 to 169 (EETKKSNHVTRKLEKRKEGRTLDP) are compositionally biased toward basic and acidic residues.

Belongs to the eukaryotic ribosomal protein eS8 family.

The chain is Small ribosomal subunit protein eS8 (RPS8) from Zea mays (Maize).